We begin with the raw amino-acid sequence, 605 residues long: MAPDGVEDSDYESDPDELNRSLATRRREASDDDEDDEEADDHDKLRAAIQIHSDEHSGVVVVDSDDNEGLHIEDSYGDDDDEEEDGDYGQVDDHVEYIADNNDKTIVAGNGTDDSAATDLVDGEEQKKKEPFAVPTAGAFYMHDDRFQELDAASNRRMRGGRRLWQSRDERKWGHDKFEEMNTQKQQYDRRTSRGRGRGRGQGRGQDRGQSRGNNSKEFTGNGHQNQFPKAVTRGRGARRYEVALRNGNQAPSVQTKQSQNSSVEVSHVDLGRPPTETATLETEAIQAKKNVFASSLNSASPPFYPSRSNNNLAQKDVQAGMGRLHINENPNPTGKKFGNTKSSSLWGRTAQTTSHGRGVPPHGQVLYQQSPNQGDKVSSPMQIRGMPKGTDQSCTQLPGQVFNQHSAVISLLPSSPPKTGSSENPYLSGEIESAVETGALVAKGKGSLQPSGRGSFMYGGTQFMGPAGMAAGHGNPNFPAFLPVMQFGGQHGGVPTFGMALPGYFQPEHGTGNPEMTWLPILAGPGALGGSYCPPYTVLDGSYQADKPGLPSSAGSSSQENSSNNPNDEEPMERPEVTNNGNSQRSNSNPNKQPRRYSEMSFSK.

Composition is skewed to acidic residues over residues 1 to 16 (MAPD…SDPD) and 30 to 40 (SDDDEDDEEAD). Disordered stretches follow at residues 1–88 (MAPD…DGDY), 101–132 (NNDK…KEPF), 151–275 (DAAS…GRPP), 350–380 (TAQT…KVSS), and 544–605 (YQAD…SFSK). At Ser30 the chain carries Phosphoserine. Over residues 41-57 (DHDKLRAAIQIHSDEHS) the composition is skewed to basic and acidic residues. Acidic residues predominate over residues 75 to 87 (SYGDDDDEEEDGD). The segment covering 166–192 (QSRDERKWGHDKFEEMNTQKQQYDRRT) has biased composition (basic and acidic residues). 3 stretches are compositionally biased toward polar residues: residues 214–228 (NNSK…QNQF), 247–265 (NGNQ…SSVE), and 367–380 (LYQQ…KVSS). The segment covering 552-567 (PSSAGSSSQENSSNNP) has biased composition (low complexity). Over residues 578 to 593 (VTNNGNSQRSNSNPNK) the composition is skewed to polar residues.

The protein belongs to the CASC3 family. Weakly interacts with EIF4A3.

It is found in the nucleus. It localises to the cytoplasm. In terms of biological role, core component of the splicing-dependent multiprotein exon junction complex (EJC) deposited at splice junctions on mRNAs. The EJC is a dynamic structure consisting of core proteins and several peripheral nuclear and cytoplasmic associated factors that join the complex only transiently either during EJC assembly or during subsequent mRNA metabolism. The EJC marks the position of the exon-exon junction in the mature mRNA for the gene expression machinery and the core components remain bound to spliced mRNAs throughout all stages of mRNA metabolism thereby influencing downstream processes including nuclear mRNA export, subcellular mRNA localization, translation efficiency and nonsense-mediated mRNA decay (NMD). Stimulates the ATPase and RNA-helicase activities of EIF4A3. This chain is Protein MLN51 homolog, found in Arabidopsis thaliana (Mouse-ear cress).